Here is a 196-residue protein sequence, read N- to C-terminus: Imidazoleglycerol-phosphate dehydratase (196 aa).

It belongs to the imidazoleglycerol-phosphate dehydratase family.

The protein resides in the cytoplasm. It catalyses the reaction D-erythro-1-(imidazol-4-yl)glycerol 3-phosphate = 3-(imidazol-4-yl)-2-oxopropyl phosphate + H2O. Its pathway is amino-acid biosynthesis; L-histidine biosynthesis; L-histidine from 5-phospho-alpha-D-ribose 1-diphosphate: step 6/9. The sequence is that of Imidazoleglycerol-phosphate dehydratase from Clostridium botulinum (strain 657 / Type Ba4).